The sequence spans 149 residues: 3-dehydroquinate dehydratase 2 (149 aa).

Residue Tyr-24 is the Proton acceptor of the active site. Substrate contacts are provided by Asn-75, His-81, and Asp-88. His-101 (proton donor) is an active-site residue. Substrate contacts are provided by residues 102–103 and Arg-112; that span reads LS.

Belongs to the type-II 3-dehydroquinase family. Homododecamer.

It carries out the reaction 3-dehydroquinate = 3-dehydroshikimate + H2O. It functions in the pathway metabolic intermediate biosynthesis; chorismate biosynthesis; chorismate from D-erythrose 4-phosphate and phosphoenolpyruvate: step 3/7. In terms of biological role, catalyzes a trans-dehydration via an enolate intermediate. The polypeptide is 3-dehydroquinate dehydratase 2 (aroQ2) (Pseudomonas putida (strain ATCC 47054 / DSM 6125 / CFBP 8728 / NCIMB 11950 / KT2440)).